The following is a 423-amino-acid chain: Histidine--tRNA ligase (423 aa).

Belongs to the class-II aminoacyl-tRNA synthetase family. In terms of assembly, homodimer.

It is found in the cytoplasm. The catalysed reaction is tRNA(His) + L-histidine + ATP = L-histidyl-tRNA(His) + AMP + diphosphate + H(+). This is Histidine--tRNA ligase (hisS) from Pasteurella multocida (strain Pm70).